The primary structure comprises 844 residues: MAAFSQYPLSTGWSFKDSDDQSPEAWMPVPVVPSVAHQDLQANQKLKNPYIGFNELDARWVNDKSWTYRTVFQKPAVAAGSSIILAFDGLDTFATVKLDGSVILQSDNMFLAHRVDVTKALEAEGDHVLEIDFDCAMRRARELREKDTKHNWASFNGDPARMAVRKAQYHWGWDWGPLLSTAGIWREVRLEVYSAKISDLWTEVELASDHQTARVSAFAEVDAADSVDSYKASFLLSLHGKEVAREVATLKDKVANVTFDVTQPSLWWPNGYGDPALYEISVSLEKEDCEIHSVSKKIGIRTAELIQQPDRHGKSFFFRINGVDVFCGGSCWIPADNLLPSITAERYRKWIELMVAGRQVMIRVWGGGCYEDDSFYQACDELGVLVWQDFMFGCGNYPTWPELLESIEKEANYNVRRLRHHPSIVVYVGNNEDYQVQESAGLVYDYEDKNPENWLKTDFPARYIYEKLLPSVVEKLSPKTVYHPGSPWGDGKITSDPTVGDMHQWNVWHGTQEKYQIFDTLGGRFNSEFGMEAFPHMSTIEYFVENEADKYPQSHVLDFHNKADGHERRIATYLVENLRTATDLETYVYLTQVVQAETMMFGYRGWRRQWGDERHCGGALLWQLNDCWPTISWAIVDYFLRPKPAFYAVARVLKPIAVGVRREHHDWSVTHAQPPKTSKYELWIASSLQKETVGTIELRFLSVNTGLDVRAPILRDNVKIVPNGTTNILEGVIDHKAQPEPHVLAARLWVDGEVTARDVDWPQPFKYLDLSDRGLEVNKVSESGNEQKLLITAKKPVKCLVFEERDGIRVSDSAMDIVPGDGQTVTVTGLKAGDAPLKYKYLGQ.

The active-site Proton donor is the Glu432.

The protein belongs to the glycosyl hydrolase 2 family. Beta-mannosidase B subfamily.

The catalysed reaction is Hydrolysis of terminal, non-reducing beta-D-mannose residues in beta-D-mannosides.. Its pathway is glycan metabolism; N-glycan degradation. Exoglycosidase that cleaves the single beta-linked mannose residue from the non-reducing end of beta-mannosidic oligosaccharides of various complexity and length. Prefers mannobiose over mannotriose and has no activity against polymeric mannan. Is also severely restricted by galactosyl substitutions at the +1 subsite. The polypeptide is Beta-mannosidase B (mndB) (Aspergillus oryzae (strain ATCC 42149 / RIB 40) (Yellow koji mold)).